The sequence spans 548 residues: Frizzled-7 (548 aa).

The N-terminal stretch at Met-1 to Ala-19 is a signal peptide. Over Gln-20–Trp-230 the chain is Extracellular. In terms of domain architecture, FZ spans Pro-31–Gln-150. Cystine bridges form between Cys-36–Cys-97, Cys-44–Cys-90, Cys-81–Cys-118, Cys-107–Cys-147, and Cys-111–Cys-135. A glycan (N-linked (GlcNAc...) asparagine) is linked at Asn-50. An N-linked (GlcNAc...) asparagine glycan is attached at Asn-151. Residues Val-231–Val-251 form a helical membrane-spanning segment. The Cytoplasmic portion of the chain corresponds to Asp-252–Pro-262. A helical membrane pass occupies residues Ile-263–Leu-283. The Extracellular portion of the chain corresponds to Glu-284–Cys-310. A helical membrane pass occupies residues Thr-311–Leu-331. Residues Ser-332 to Gln-353 lie on the Cytoplasmic side of the membrane. Residues Tyr-354–Gly-374 form a helical membrane-spanning segment. Residues Gln-375–Gly-397 lie on the Extracellular side of the membrane. Residues Phe-398–Phe-418 form a helical membrane-spanning segment. Residues Val-419–Arg-444 lie on the Cytoplasmic side of the membrane. Residues Ile-445 to Tyr-465 form a helical membrane-spanning segment. Topologically, residues Glu-466–Thr-502 are extracellular. Residues Val-503–Trp-523 form a helical membrane-spanning segment. The Cytoplasmic portion of the chain corresponds to Ser-524 to Val-548. The short motif at Lys-526 to Trp-531 is the Lys-Thr-X-X-X-Trp motif, mediates interaction with the PDZ domain of Dvl family members element. The short motif at Thr-546–Val-548 is the PDZ-binding element.

It belongs to the G-protein coupled receptor Fz/Smo family. Interacts with wnt11 and sdc4. The extracellular domain interacts with the extracellular domain of pcdh8/papc.

The protein resides in the cell membrane. Its subcellular location is the endosome membrane. In terms of biological role, receptor for Wnt proteins. Acts in both canonical and non-canonical Wnt pathways. Although different papers report differing Wnt preferences, wnt5a, wnt8b and wnt11 have been proposed as synergists. In the canonical Wnt pathway, acts via beta-catenin to promote the expression of the dorsal genes siamois, twin and nodal3 and to establish the dorsal axis of the embryo and induce dorsal mesoderm formation. In a non-canonical Wnt/planar cell polarity (PCP) pathway, acts with sdc4 and dvl2/dsh to regulate convergent extension movements in gastrulation. Triggers phosphorylation of dvl2/dsh and its translocation to the plasma membrane. In a third branch of Wnt signaling, acts in a non-canonical pathway via trimeric G proteins, and independently of dvl2/dsh, to recruit protein kinase C (PKC) to the membrane and thus activate PKC. PKC signaling controls cell sorting and tissue separation during gastrulation. The polypeptide is Frizzled-7 (Xenopus tropicalis (Western clawed frog)).